The chain runs to 631 residues: Polyadenylate-binding protein, cytoplasmic and nuclear (631 aa).

The interval Met-1–Ala-56 is disordered. 4 consecutive RRM domains span residues Ala-58 to Arg-136, Gly-146 to Ser-223, Thr-239 to Lys-316, and Val-342 to Arg-419. Residues Gly-518–Pro-545 form a disordered region. The 82-residue stretch at Pro-545 to Lys-626 folds into the PABC domain.

This sequence belongs to the polyadenylate-binding protein type-1 family.

It is found in the cytoplasm. The protein localises to the nucleus. Functionally, binds the poly(A) tail of mRNA. Appears to be an important mediator of the multiple roles of the poly(A) tail in mRNA biogenesis, stability and translation. In the nucleus, involved in both mRNA cleavage and polyadenylation. Is also required for efficient mRNA export to the cytoplasm. Acts in concert with a poly(A)-specific nuclease (PAN) to affect poly(A) tail shortening, which may occur concomitantly with either nucleocytoplasmic mRNA transport or translational initiation. In the cytoplasm, stimulates translation initiation and regulates mRNA decay through translation termination-coupled poly(A) shortening, probably mediated by PAN. This Meyerozyma guilliermondii (strain ATCC 6260 / CBS 566 / DSM 6381 / JCM 1539 / NBRC 10279 / NRRL Y-324) (Yeast) protein is Polyadenylate-binding protein, cytoplasmic and nuclear (PAB1).